A 638-amino-acid chain; its full sequence is Threonine--tRNA ligase (638 aa).

The TGS domain occupies 1 to 61 (MPKITLPDGT…KNDSKVVIIT (61 aa)). A catalytic region spans residues 242-533 (DHRKLGKKHS…LIEQYEAKFP (292 aa)). Zn(2+)-binding residues include C333, H384, and H510.

This sequence belongs to the class-II aminoacyl-tRNA synthetase family. Homodimer. The cofactor is Zn(2+).

It is found in the cytoplasm. It carries out the reaction tRNA(Thr) + L-threonine + ATP = L-threonyl-tRNA(Thr) + AMP + diphosphate + H(+). Catalyzes the attachment of threonine to tRNA(Thr) in a two-step reaction: L-threonine is first activated by ATP to form Thr-AMP and then transferred to the acceptor end of tRNA(Thr). Also edits incorrectly charged L-seryl-tRNA(Thr). This is Threonine--tRNA ligase from Prochlorococcus marinus (strain MIT 9515).